Consider the following 493-residue polypeptide: 1-aminocyclopropane-1-carboxylate synthase CMW33 (493 aa).

Lysine 279 bears the N6-(pyridoxal phosphate)lysine mark.

The protein belongs to the class-I pyridoxal-phosphate-dependent aminotransferase family. As to quaternary structure, homodimer. Pyridoxal 5'-phosphate is required as a cofactor.

The enzyme catalyses S-adenosyl-L-methionine = 1-aminocyclopropane-1-carboxylate + S-methyl-5'-thioadenosine + H(+). It participates in alkene biosynthesis; ethylene biosynthesis via S-adenosyl-L-methionine; ethylene from S-adenosyl-L-methionine: step 1/2. Its function is as follows. Catalyzes the formation of 1-aminocyclopropane-1-carboxylate, a direct precursor of ethylene in higher plants. This chain is 1-aminocyclopropane-1-carboxylate synthase CMW33 (ACS1), found in Cucurbita maxima (Pumpkin).